The chain runs to 626 residues: MHYPKVYDVIVIGGGHAGTEAALAAARMGRQTLLLTHNIETLGQMSCNPAIGGIGKSHLVREIDALGGAMALAADKGGIQFRILNSRKGAAVRATRAQADRVRYKAAIRHTLENQANLDIFQQAADDLIVEGDTVKGVVTQMGIRFDTKTVVLTTGTFLGGVIHIGLEKSSGGRAGDPPSIALSHRLRELNLPVGRLKTGTPPRIDARSVDFSVMTPQPGDFPSPVMSFMGDVSMHPEQVSCYITHTNEKTHDIIRGGLDRSPMYTGVIEGVGPRYCPSIEDKIHRFADKDSHQVFLEPEGLDTHELYPNGISTSLPFDVQFELVRSIRGMENAHILRPGYAIEYDYFNPQALKFTLETKAINNLYFAGQINGTTGYEEAGAQGLLAGLNAARRAWDQEQWTPKRDQAYMGVLVDDLITLGTKEPYRMFTSRAEYRLMLREDNADQRLTPVGREMGLVDDVRWAAYCEKMEAVETETARLAHLWAAPNNPMGKQFVEMTGADLSKECSAIDLLKRPNINFTQIAELTGSQVSTQVGDQIEIAVKYEGYINRQHEDVAQLKRLEETKIPADFDYDIVSGLSREITQKLKTVRPETLAQAHRIPGVTPAAVQLVMITIRKNAQTKKIA.

13–18 (GGGHAG) contacts FAD. 273-287 (GPRYCPSIEDKIHRF) contacts NAD(+).

Belongs to the MnmG family. As to quaternary structure, homodimer. Heterotetramer of two MnmE and two MnmG subunits. FAD serves as cofactor.

The protein localises to the cytoplasm. Functionally, NAD-binding protein involved in the addition of a carboxymethylaminomethyl (cmnm) group at the wobble position (U34) of certain tRNAs, forming tRNA-cmnm(5)s(2)U34. The protein is tRNA uridine 5-carboxymethylaminomethyl modification enzyme MnmG of Acinetobacter baylyi (strain ATCC 33305 / BD413 / ADP1).